A 143-amino-acid polypeptide reads, in one-letter code: Cytotoxic L-amino-acid oxidase (143 aa).

It belongs to the flavin monoamine oxidase family. The cofactor is FAD.

The catalysed reaction is an L-alpha-amino acid + O2 + H2O = a 2-oxocarboxylate + H2O2 + NH4(+). Cytotoxic L-amino acid oxidase with high oxidase activity towards DL-methionine and L-methionine, L-phenylalanine, DL-norleucine, L-isoleucine, L-arginine, L-tyrosine, and DL-leucine. Shows relatively low activity towards DL-lysine and L-lysine, DL-asparagine, DL-valine, L-histidine, DL-threonine, DL-tryptophan, and L-glutamic acid; and no activity towards L-cysteine, L-glycine, L-proline, L-oxyproline, DL-serine, and DL-aspartic acid. Does not use benzylamine, ethanolamine, diethylamine, meta- and para-phenylendiamine, ortho-, meta- and para-aminophenols, or putrescin as a substrate. Acts as a toxin by inducing chromatin condensation, as well as DNA and nucleus fragmentation, which are typical for apoptosis. Probably induces cell damage indirectly via the generation of free radicals and oxidant agents that can trigger cell impairment and apoptosis by a caspase-independent pathway. This Amanita phalloides (Death cap) protein is Cytotoxic L-amino-acid oxidase.